The following is a 303-amino-acid chain: Coenzyme PQQ synthesis protein B (303 aa).

Belongs to the PqqB family.

It participates in cofactor biosynthesis; pyrroloquinoline quinone biosynthesis. May be involved in the transport of PQQ or its precursor to the periplasm. In Pseudomonas putida (strain W619), this protein is Coenzyme PQQ synthesis protein B.